Here is a 524-residue protein sequence, read N- to C-terminus: Histidine ammonia-lyase (524 aa).

The 5-imidazolinone (Ala-Gly) cross-link spans 139–141 (ASG). Ser140 is modified (2,3-didehydroalanine (Ser)). Residues 500–524 (ADTQAPAPAKLPDSGDEDRDTTSRH) are disordered.

It belongs to the PAL/histidase family. In terms of processing, contains an active site 4-methylidene-imidazol-5-one (MIO), which is formed autocatalytically by cyclization and dehydration of residues Ala-Ser-Gly.

The protein localises to the cytoplasm. It carries out the reaction L-histidine = trans-urocanate + NH4(+). It functions in the pathway amino-acid degradation; L-histidine degradation into L-glutamate; N-formimidoyl-L-glutamate from L-histidine: step 1/3. This is Histidine ammonia-lyase (hutH) from Deinococcus radiodurans (strain ATCC 13939 / DSM 20539 / JCM 16871 / CCUG 27074 / LMG 4051 / NBRC 15346 / NCIMB 9279 / VKM B-1422 / R1).